A 414-amino-acid polypeptide reads, in one-letter code: Isocitrate dehydrogenase [NADP] cytoplasmic (414 aa).

Ser2 is subject to N-acetylserine. Tyr42 carries the phosphotyrosine modification. Position 75–77 (75–77) interacts with NADP(+); that stretch reads TIT. Thr77 serves as a coordination point for substrate. Lys81 carries the N6-acetyllysine modification. Arg82 lines the NADP(+) pocket. Residues 94 to 100 and Arg109 contribute to the substrate site; that span reads SPNGTIR. Residue Lys126 is modified to N6-succinyllysine. Positions 132 and 212 each coordinate substrate. Lys224, Lys233, and Lys243 each carry N6-acetyllysine. Residue Asp252 coordinates Mn(2+). Lys260 contributes to the NADP(+) binding site. Mn(2+)-binding residues include Asp275 and Asp279. 310-315 serves as a coordination point for NADP(+); that stretch reads GTVTRH. Lys321 carries the post-translational modification N6-acetyllysine. An NADP(+)-binding site is contributed by Asn328. Ser389 carries the post-translational modification Phosphoserine. N6-succinyllysine is present on Lys400.

The protein belongs to the isocitrate and isopropylmalate dehydrogenases family. As to quaternary structure, homodimer. The cofactor is Mg(2+). Mn(2+) is required as a cofactor. Post-translationally, acetylation at Lys-374 dramatically reduces catalytic activity. In terms of tissue distribution, highly expressed in the liver followed by kidney, lower expression in spleen, brain and lung.

It is found in the cytoplasm. The protein localises to the cytosol. It catalyses the reaction D-threo-isocitrate + NADP(+) = 2-oxoglutarate + CO2 + NADPH. Its activity is regulated as follows. Irreversibly inhibited by Cd(2+) concentrations above 50 uM. Its function is as follows. Catalyzes the NADP(+)-dependent oxidative decarboxylation of isocitrate (D-threo-isocitrate) to 2-ketoglutarate (2-oxoglutarate), which is required by other enzymes such as the phytanoyl-CoA dioxygenase. Plays a critical role in the generation of NADPH, an important cofactor in many biosynthesis pathways. May act as a corneal epithelial crystallin and may be involved in maintaining corneal epithelial transparency. The polypeptide is Isocitrate dehydrogenase [NADP] cytoplasmic (Idh1) (Mus musculus (Mouse)).